We begin with the raw amino-acid sequence, 30 residues long: Cysteine-rich venom protein hematin (30 aa).

Belongs to the CRISP family. Post-translationally, contains 8 disulfide bonds. In terms of tissue distribution, expressed by the venom gland.

Its subcellular location is the secreted. Functionally, inhibits calcium-activated potassium channels (KCa), voltage-gated potassium channel (Kv), and the calcium release channel/ryanodine receptor (RyR). This is Cysteine-rich venom protein hematin from Hemachatus haemachatus (Rinkhals).